A 342-amino-acid polypeptide reads, in one-letter code: Succinylglutamate desuccinylase (342 aa).

3 residues coordinate Zn(2+): His64, Glu67, and His159. Glu222 is a catalytic residue.

Belongs to the AspA/AstE family. Succinylglutamate desuccinylase subfamily. Requires Zn(2+) as cofactor.

The enzyme catalyses N-succinyl-L-glutamate + H2O = L-glutamate + succinate. Its pathway is amino-acid degradation; L-arginine degradation via AST pathway; L-glutamate and succinate from L-arginine: step 5/5. Its function is as follows. Transforms N(2)-succinylglutamate into succinate and glutamate. This chain is Succinylglutamate desuccinylase, found in Burkholderia orbicola (strain AU 1054).